A 446-amino-acid chain; its full sequence is Golgi reassembly-stacking protein 1 (446 aa).

A disordered region spans residues 1–20; it reads MGLGASSEQPAGGEGFHLHG. The N-myristoyl glycine moiety is linked to residue G2. 2 consecutive PDZ GRASP-type domains span residues 14–104 and 110–198; these read EGFH…FCSF and HVWH…YGYL. The tract at residues 14–214 is GRASP; that stretch reads EGFHLHGVQE…PSSQHKKPPG (201 aa). Residues H17, H19, and C102 each coordinate Zn(2+). Positions 189-201 are essential for interaction with GOLGA2/GM130; sequence LGCGIGYGYLHRI. Disordered regions lie at residues 202-252 and 343-446; these read PTQP…LGSR and VSGP…EPGL. A phosphothreonine mark is found at T216, T220, and T224. The segment covering 343 to 354 has biased composition (low complexity); the sequence is VSGPEDIGSSSS. Phosphoserine is present on residues S365, S367, and S376.

The protein belongs to the GORASP family. In terms of assembly, homodimer. Forms higher-order oligomers under interphase but not mitotic conditions. Dimers of the protein on one membrane might be able to interact with dimers on another and so stack cisternae. Interacts with the C-terminus of GOLGA2/GM130 under both mitotic and non-mitotic conditions. The interaction is critical for the correct targeting of both proteins to the cis-Golgi. Interacts with TMED2 and TMED3. Post-translationally, phosphorylated by CDC2/B1 and PLK kinases during mitosis. Phosphorylation cycle correlates with the cisternal stacking cycle. Phosphorylation of the homodimer prevents the association of dimers into higher-order oligomers, leading to cisternal unstacking. Target for caspase-3 cleavage during apoptosis. The cleavage contributes to Golgi fragmentation and occurs very early in the execution phase of apoptosis. In terms of processing, myristoylated.

It is found in the golgi apparatus. The protein localises to the cis-Golgi network membrane. Key structural protein of the Golgi apparatus. The membrane cisternae of the Golgi apparatus adhere to each other to form stacks, which are aligned side by side to form the Golgi ribbon. Acting in concert with GORASP2/GRASP55, is required for the formation and maintenance of the Golgi ribbon, and may be dispensable for the formation of stacks. However, other studies suggest that GORASP1 plays an important role in assembly and membrane stacking of the cisternae, and in the reassembly of Golgi stacks after breakdown during mitosis. Caspase-mediated cleavage of GORASP1 is required for fragmentation of the Golgi during apoptosis. Also mediates, via its interaction with GOLGA2/GM130, the docking of transport vesicles with the Golgi membranes. Mediates ER stress-induced unconventional (ER/Golgi-independent) trafficking of core-glycosylated CFTR to cell membrane. This chain is Golgi reassembly-stacking protein 1 (Gorasp1), found in Mus musculus (Mouse).